Reading from the N-terminus, the 173-residue chain is Large ribosomal subunit protein uL10 (173 aa).

This sequence belongs to the universal ribosomal protein uL10 family. In terms of assembly, part of the ribosomal stalk of the 50S ribosomal subunit. The N-terminus interacts with L11 and the large rRNA to form the base of the stalk. The C-terminus forms an elongated spine to which L12 dimers bind in a sequential fashion forming a multimeric L10(L12)X complex.

Functionally, forms part of the ribosomal stalk, playing a central role in the interaction of the ribosome with GTP-bound translation factors. The chain is Large ribosomal subunit protein uL10 from Christiangramia forsetii (strain DSM 17595 / CGMCC 1.15422 / KT0803) (Gramella forsetii).